Reading from the N-terminus, the 371-residue chain is Glutamate 5-kinase (371 aa).

Lys-14 is an ATP binding site. Residues Ser-54, Asp-141, and Asn-153 each coordinate substrate. 173–174 (TD) is an ATP binding site. Positions 280-357 (AGSLIVDAGA…SDIEQLLGYI (78 aa)) constitute a PUA domain.

It belongs to the glutamate 5-kinase family.

The protein localises to the cytoplasm. It catalyses the reaction L-glutamate + ATP = L-glutamyl 5-phosphate + ADP. The protein operates within amino-acid biosynthesis; L-proline biosynthesis; L-glutamate 5-semialdehyde from L-glutamate: step 1/2. Its function is as follows. Catalyzes the transfer of a phosphate group to glutamate to form L-glutamate 5-phosphate. The polypeptide is Glutamate 5-kinase (Azoarcus sp. (strain BH72)).